A 337-amino-acid polypeptide reads, in one-letter code: Holliday junction branch migration complex subunit RuvB (337 aa).

A large ATPase domain (RuvB-L) region spans residues 1-181; sequence MQRLVEIERF…FGMNFRMQFY (181 aa). ATP-binding positions include Leu-20, Arg-21, Gly-62, Lys-65, Thr-66, Thr-67, 128-130, Arg-171, Tyr-181, and Arg-218; that span reads EDF. Thr-66 provides a ligand contact to Mg(2+). Positions 182–252 are small ATPAse domain (RuvB-S); sequence SPEELSKIIS…RAQYALDELG (71 aa). The tract at residues 255 to 337 is head domain (RuvB-H); the sequence is SYGFDEMDIK…MPALDDGGLF (83 aa). The DNA site is built by Arg-309 and Arg-314.

The protein belongs to the RuvB family. In terms of assembly, homohexamer. Forms an RuvA(8)-RuvB(12)-Holliday junction (HJ) complex. HJ DNA is sandwiched between 2 RuvA tetramers; dsDNA enters through RuvA and exits via RuvB. An RuvB hexamer assembles on each DNA strand where it exits the tetramer. Each RuvB hexamer is contacted by two RuvA subunits (via domain III) on 2 adjacent RuvB subunits; this complex drives branch migration. In the full resolvosome a probable DNA-RuvA(4)-RuvB(12)-RuvC(2) complex forms which resolves the HJ.

The protein resides in the cytoplasm. It carries out the reaction ATP + H2O = ADP + phosphate + H(+). Its function is as follows. The RuvA-RuvB-RuvC complex processes Holliday junction (HJ) DNA during genetic recombination and DNA repair, while the RuvA-RuvB complex plays an important role in the rescue of blocked DNA replication forks via replication fork reversal (RFR). RuvA specifically binds to HJ cruciform DNA, conferring on it an open structure. The RuvB hexamer acts as an ATP-dependent pump, pulling dsDNA into and through the RuvAB complex. RuvB forms 2 homohexamers on either side of HJ DNA bound by 1 or 2 RuvA tetramers; 4 subunits per hexamer contact DNA at a time. Coordinated motions by a converter formed by DNA-disengaged RuvB subunits stimulates ATP hydrolysis and nucleotide exchange. Immobilization of the converter enables RuvB to convert the ATP-contained energy into a lever motion, pulling 2 nucleotides of DNA out of the RuvA tetramer per ATP hydrolyzed, thus driving DNA branch migration. The RuvB motors rotate together with the DNA substrate, which together with the progressing nucleotide cycle form the mechanistic basis for DNA recombination by continuous HJ branch migration. Branch migration allows RuvC to scan DNA until it finds its consensus sequence, where it cleaves and resolves cruciform DNA. The chain is Holliday junction branch migration complex subunit RuvB from Sulfurimonas denitrificans (strain ATCC 33889 / DSM 1251) (Thiomicrospira denitrificans (strain ATCC 33889 / DSM 1251)).